A 238-amino-acid chain; its full sequence is NAD(P)H-hydrate epimerase (238 aa).

The YjeF N-terminal domain maps to 10-225 (AIKVDQILFN…ALQRQYELNL (216 aa)). 68–72 (NNGGD) is a binding site for (6S)-NADPHX. Residues Asn69 and Asp133 each contribute to the K(+) site. (6S)-NADPHX-binding positions include 137 to 143 (GFSFKPP) and Asp166. Residue Ser169 coordinates K(+).

The protein belongs to the NnrE/AIBP family. K(+) is required as a cofactor.

It carries out the reaction (6R)-NADHX = (6S)-NADHX. It catalyses the reaction (6R)-NADPHX = (6S)-NADPHX. In terms of biological role, catalyzes the epimerization of the S- and R-forms of NAD(P)HX, a damaged form of NAD(P)H that is a result of enzymatic or heat-dependent hydration. This is a prerequisite for the S-specific NAD(P)H-hydrate dehydratase to allow the repair of both epimers of NAD(P)HX. This is NAD(P)H-hydrate epimerase from Drosophila willistoni (Fruit fly).